Here is a 586-residue protein sequence, read N- to C-terminus: Kelch-like protein 7 (586 aa).

The 68-residue stretch at 44–111 (CDVILMVQER…AYTARISVNS (68 aa)) folds into the BTB domain. One can recognise a BACK domain in the interval 146–248 (CLGISVLAEC…SKNFLSKTVQ (103 aa)). Kelch repeat units lie at residues 294-336 (RIAL…FWDN), 337-382 (VVYI…AAEG), 383-430 (KIYT…EANG), 431-481 (LIYV…FVKD), 483-528 (IFAV…AVGS), and 530-575 (IYVL…CVVD).

Homodimer. Component of the BCR(KLHL7) E3 ubiquitin ligase complex, at least composed of CUL3 and KLHL7 and RBX1.

It localises to the nucleus. It is found in the cytoplasm. The protein operates within protein modification; protein ubiquitination. Substrate-specific adapter of a BCR (BTB-CUL3-RBX1) E3 ubiquitin ligase complex. The BCR(KLHL7) complex acts by mediating ubiquitination and subsequent degradation of substrate proteins. Probably mediates 'Lys-48'-linked ubiquitination. The sequence is that of Kelch-like protein 7 (Klhl7) from Rattus norvegicus (Rat).